A 577-amino-acid chain; its full sequence is Beta-fructofuranosidase, insoluble isoenzyme 1 (577 aa).

A signal peptide spans 1-22 (MGTRLLALAPWLLLLLLQLAGA). D63 is an active-site residue. 3 N-linked (GlcNAc...) asparagine glycosylation sites follow: N158, N183, and N333.

Belongs to the glycosyl hydrolase 32 family. Expressed in roots, leaves and flowers. Weakly expressed in seeds.

The protein resides in the secreted. It localises to the extracellular space. It is found in the apoplast. Its subcellular location is the cell wall. It catalyses the reaction Hydrolysis of terminal non-reducing beta-D-fructofuranoside residues in beta-D-fructofuranosides.. May play a role in sucrose partitioning during seed development and in stress response. This Oryza sativa subsp. japonica (Rice) protein is Beta-fructofuranosidase, insoluble isoenzyme 1 (CIN1).